We begin with the raw amino-acid sequence, 98 residues long: NADH-ubiquinone oxidoreductase chain 4L (98 aa).

3 consecutive transmembrane segments (helical) span residues 2–22 (PSISTNIILAFITALLGMLIF), 29–49 (SLLCLEGMMLSMFILSTLTIL), and 61–81 (ILLLVFAACEAAVGLALLVTV).

Belongs to the complex I subunit 4L family. In terms of assembly, core subunit of respiratory chain NADH dehydrogenase (Complex I) which is composed of 45 different subunits.

Its subcellular location is the mitochondrion inner membrane. It carries out the reaction a ubiquinone + NADH + 5 H(+)(in) = a ubiquinol + NAD(+) + 4 H(+)(out). Core subunit of the mitochondrial membrane respiratory chain NADH dehydrogenase (Complex I) which catalyzes electron transfer from NADH through the respiratory chain, using ubiquinone as an electron acceptor. Part of the enzyme membrane arm which is embedded in the lipid bilayer and involved in proton translocation. In Eulemur coronatus (Crowned lemur), this protein is NADH-ubiquinone oxidoreductase chain 4L (MT-ND4L).